The sequence spans 398 residues: MATVEELKLRIRELENELIKSKQKQSDAEHNIRPKIEQMSAEVVDSNPYSRLMALKRMGIVQDYEKIRSFAVAVVGVGGVGSVTAEMLTRCGIGKLLLFDYDKVELANMNRLFFQPHQAGLSKVEAAQHTLRNINPDVAFETHNYNITTMDNFTHFMDRVSHGGLEEGKPVDLILSCVDNFEARMAINTACNELGQIWMESGVSENAVSGHIQLIIPGETACFACAPPLVVAANIDEKTLKRDGVCAASLPTTMGVVAGLLVQNVLKYLLGFGTVSYYLGYNAMQDFFPSMAMKANPQCDDRHCRRQQDEYKKKEAERPKQEVVQEEEEVVHEDNEWGIELVSEVTEAELQDASGPIPDLPEGITVAYTIPEKDGGSGETVEETEQSLEELMAQMKKI.

Positions 79, 100, 123, 146, and 180 each coordinate ATP. Positions 222 and 225 each coordinate Zn(2+). Residue Cys246 is the Glycyl thioester intermediate of the active site. Zn(2+) contacts are provided by Cys299 and Cys304. Residues 330–342 (VVHEDNEWGIELV) carry the UFM1-interacting sequence (UIS) motif. Residues 343–373 (SEVTEAELQDASGPIPDLPEGITVAYTIPEK) are linker. The UFC1-binding sequence (UFC) signature appears at 383-398 (ETEQSLEELMAQMKKI).

This sequence belongs to the ubiquitin-activating E1 family. UBA5 subfamily. In terms of assembly, homodimer; homodimerization is required for ufm1 activation. Interacts (via UIS motif) with ufm1; binds ufm1 via a trans-binding mechanism in which ufm1 interacts with distinct sites in both subunits of the uba5 homodimer. Interacts (via C-terminus) with ufc1.

It localises to the cytoplasm. The protein resides in the nucleus. Its subcellular location is the endoplasmic reticulum membrane. The protein localises to the golgi apparatus. In terms of biological role, E1-like enzyme which specifically catalyzes the first step in ufmylation. Activates ufm1 by first adenylating its C-terminal glycine residue with ATP, and thereafter linking this residue to the side chain of a cysteine residue in E1, yielding a ufm1-E1 thioester and free AMP. Activates ufm1 via a trans-binding mechanism, in which ufm1 interacts with distinct sites in both subunits of the uba5 homodimer. Trans-binding also promotes stabilization of the uba5 homodimer, and enhances ATP-binding. Transfer of ufm1 from uba5 to the E2-like enzyme UFC1 also takes place using a trans mechanism. Ufmylation plays a key role in various processes, such as ribosome recycling, response to DNA damage, interferon response or reticulophagy (also called ER-phagy). In Danio rerio (Zebrafish), this protein is Ubiquitin-like modifier-activating enzyme 5.